Here is a 26-residue protein sequence, read N- to C-terminus: Orexigenic neuropeptide 26RFa (26 aa).

Residue Phe-26 is modified to Phenylalanine amide.

Brain.

The protein resides in the secreted. Functionally, may have orexigenic activity. May promote aldosterone secretion by the adrenal gland. The protein is Orexigenic neuropeptide 26RFa of Pelophylax lessonae (Pool frog).